The sequence spans 729 residues: MNEQIIEINLNNLDEKYEFNKIAKQASGAVMYRQGKAVLIAAVAVDEKAVEEDFLPLTVQYMERSYAAAKIPGGFIKRETKPGDFETLTSRIVDRSLRPLFPKGFYYPVTISVMVVSSDSEVDMQVAALHAANAALYVSDISVQRSIAAVRVGKIEDELVLNPTLSQQDESVLDLLVVGSEQDIIMIEMRAIASEKIDDIEMDMIDPMMGGVPLILEHQECNEVDNEALVDAIAFAAKAIEEASAIYEKEFTPVMRTPLGLSLAEEKVDEELYAYIKENYSEAVAKAISHMAKSERSTELKKVRAQIMEALESEGKEADKELVSKVLDRYKTTVVRDMILDKGIRADGRGLDEVRPITIETNILPSVHGSCLFTRGQTQALVTATLGDKKDAQMFELITDKNTQSENFMVHYNFPGYSVGEAKFIGAPGRRELGHGNLAKRALEPVIPINYDGTIRLVSEVLESNGSSSMATICGGALALRAAEVDMVELVAGIAMGLVTDGERVAVLTDIMGLEDHDGDMDFKIAGTRNGITALQMDIKLGGIDLITLKVALEKAAQGKDHILDLMEEAEKKMESSQALPSTEHFSINPQKIADIIGKAGATIRDIIEKFEVSIDLDRDKGGVKLSGHDKEKVAAAKEHIEKIANAPVRKQMQYEVGKTYVGKVKKIVDFGIFVEMPDGFDALLHISKVAKERVNNLNERYHEGDDITVVVMEQKGKKVELATPEYLA.

2 residues coordinate Mg(2+): Asp516 and Asp522. One can recognise a KH domain in the interval 581–641 (PSTEHFSINP…EKVAAAKEHI (61 aa)). The 68-residue stretch at 658–725 (GKTYVGKVKK…KGKKVELATP (68 aa)) folds into the S1 motif domain.

This sequence belongs to the polyribonucleotide nucleotidyltransferase family. The cofactor is Mg(2+).

Its subcellular location is the cytoplasm. The catalysed reaction is RNA(n+1) + phosphate = RNA(n) + a ribonucleoside 5'-diphosphate. Functionally, involved in mRNA degradation. Catalyzes the phosphorolysis of single-stranded polyribonucleotides processively in the 3'- to 5'-direction. In Sulfurovum sp. (strain NBC37-1), this protein is Polyribonucleotide nucleotidyltransferase.